A 773-amino-acid polypeptide reads, in one-letter code: DNA gyrase subunit B (773 aa).

Positions 416-530 constitute a Toprim domain; that stretch reads SEIFLVEGDS…QGHVFIAQAP (115 aa). Mg(2+) contacts are provided by E422, D495, and D497.

It belongs to the type II topoisomerase GyrB family. As to quaternary structure, heterotetramer, composed of two GyrA and two GyrB chains. In the heterotetramer, GyrA contains the active site tyrosine that forms a transient covalent intermediate with DNA, while GyrB binds cofactors and catalyzes ATP hydrolysis. Mg(2+) serves as cofactor. Mn(2+) is required as a cofactor. It depends on Ca(2+) as a cofactor.

It localises to the cytoplasm. It carries out the reaction ATP-dependent breakage, passage and rejoining of double-stranded DNA.. Functionally, a type II topoisomerase that negatively supercoils closed circular double-stranded (ds) DNA in an ATP-dependent manner to modulate DNA topology and maintain chromosomes in an underwound state. Negative supercoiling favors strand separation, and DNA replication, transcription, recombination and repair, all of which involve strand separation. Also able to catalyze the interconversion of other topological isomers of dsDNA rings, including catenanes and knotted rings. Type II topoisomerases break and join 2 DNA strands simultaneously in an ATP-dependent manner. This chain is DNA gyrase subunit B, found in Helicobacter pylori (strain J99 / ATCC 700824) (Campylobacter pylori J99).